The sequence spans 365 residues: tRNA N6-adenosine threonylcarbamoyltransferase (365 aa).

Residues His122 and His126 each coordinate Fe cation. Substrate is bound by residues 147–151 (LVSGG), Asp180, Gly193, and Asn293. Position 321 (Asp321) interacts with Fe cation. The segment at 340 to 365 (PNEIDTAARPRWPLSERTPATPEHVS) is disordered.

This sequence belongs to the KAE1 / TsaD family. Fe(2+) is required as a cofactor.

The protein resides in the cytoplasm. It carries out the reaction L-threonylcarbamoyladenylate + adenosine(37) in tRNA = N(6)-L-threonylcarbamoyladenosine(37) in tRNA + AMP + H(+). In terms of biological role, required for the formation of a threonylcarbamoyl group on adenosine at position 37 (t(6)A37) in tRNAs that read codons beginning with adenine. Is involved in the transfer of the threonylcarbamoyl moiety of threonylcarbamoyl-AMP (TC-AMP) to the N6 group of A37, together with TsaE and TsaB. TsaD likely plays a direct catalytic role in this reaction. This Gluconobacter oxydans (strain 621H) (Gluconobacter suboxydans) protein is tRNA N6-adenosine threonylcarbamoyltransferase.